Consider the following 1095-residue polypeptide: Solute carrier family 12 member 1 (1095 aa).

Residues 1 to 173 lie on the Cytoplasmic side of the membrane; sequence MSVNIPSNSV…EEDVTGVVKF (173 aa). Positions 16-19 match the RFXV motif motif; that stretch reads RFQV. Positions 26 to 45 are disordered; it reads HGSGAAMSDSTDPPHYEETS. Serine 57 and serine 87 each carry phosphoserine. 4 positions are modified to phosphothreonine: threonine 91, threonine 96, threonine 101, and threonine 114. Serine 116 is subject to Phosphoserine. Serine 126 is modified (phosphoserine; by AMPK). Serine 144 is modified (phosphoserine). A helical transmembrane segment spans residues 174-194; it reads GWVKGVLVRCMLNIWGVMLFI. The Extracellular portion of the chain corresponds to 195-197; it reads RLS. A helical transmembrane segment spans residues 198-218; the sequence is WIVGEAGIGLGVIIIGLSVVV. Residues 219–255 are Cytoplasmic-facing; that stretch reads TTLTGISMSAICTNGVVRGGGAYYLISRSLGPEFGGS. Residues 256 to 276 form a helical membrane-spanning segment; that stretch reads IGLIFRFANAVRVAMYVVGFA. The Extracellular portion of the chain corresponds to 277-298; the sequence is ETVVDLLKESDSMMVDPTNDIR. A helical membrane pass occupies residues 299–319; it reads IIGSITVVILLGISVAGMEWE. At 320–323 the chain is on the cytoplasmic side; it reads AKAQ. Residues 324–344 form a helical membrane-spanning segment; the sequence is VILLVILLIGIANFFIGTVIP. Over 345-375 the chain is Extracellular; that stretch reads SNNEKKSRGFFNYQASIFAENFGPSFTEGEG. The helical transmembrane segment at 376–396 threads the bilayer; the sequence is FFSVFAIFFPAATGILAGANI. Residues 397–413 are Cytoplasmic-facing; sequence SGDLEDPQDAIPRGTML. Residues 414-434 traverse the membrane as a helical segment; it reads AIFITTVAYIGVAICVRACVV. Residues 435–546 lie on the Extracellular side of the membrane; the sequence is RDATGSMNDT…NNEPLRGYFL (112 aa). N-linked (GlcNAc...) asparagine glycosylation is found at asparagine 442 and asparagine 452. Helical transmembrane passes span 547–567 and 568–588; these read TFVI…APII and SNFF…ASYA. Residues 589–605 lie on the Extracellular side of the membrane; the sequence is KSPGWRPAYGIYNMWVS. A helical membrane pass occupies residues 606–626; that stretch reads LFGAILCCAVMFVINWWAAVI. Topologically, residues 627–1095 are cytoplasmic; it reads TYVIELFLYI…NHKNVLTFYS (469 aa).

The protein belongs to the SLC12A transporter family. When phosphorylated, interacts with PPP3CB. Phosphorylated at Ser-87, Thr-96 and Thr-101 by OXSR1/OSR1 and STK39/SPAK downstream of WNK kinases (WNK1, WNK2, WNK3 or WNK4), promoting its activity. In terms of tissue distribution, expressed predominantly in kidney (at protein level).

Its subcellular location is the apical cell membrane. It carries out the reaction K(+)(out) + 2 chloride(out) + Na(+)(out) = K(+)(in) + 2 chloride(in) + Na(+)(in). Activated following phosphorylation by OXSR1/OSR1 and STK39/SPAK downstream of WNK kinases (WNK1, WNK2, WNK3 or WNK4). Functionally, renal sodium, potassium and chloride ion cotransporter that mediates the transepithelial NaCl reabsorption in the thick ascending limb and plays an essential role in the urinary concentration and volume regulation. Electrically silent transporter system. The chain is Solute carrier family 12 member 1 (Slc12a1) from Rattus norvegicus (Rat).